We begin with the raw amino-acid sequence, 367 residues long: Quinolinate synthase (367 aa).

Positions 45 and 62 each coordinate iminosuccinate. Cysteine 109 serves as a coordination point for [4Fe-4S] cluster. Iminosuccinate-binding positions include tyrosine 140 to asparagine 142 and serine 161. [4Fe-4S] cluster is bound at residue cysteine 229. Residues histidine 255–glutamate 257 and threonine 272 each bind iminosuccinate. Cysteine 319 provides a ligand contact to [4Fe-4S] cluster.

Belongs to the quinolinate synthase family. Type 3 subfamily. [4Fe-4S] cluster serves as cofactor.

It is found in the cytoplasm. The enzyme catalyses iminosuccinate + dihydroxyacetone phosphate = quinolinate + phosphate + 2 H2O + H(+). It participates in cofactor biosynthesis; NAD(+) biosynthesis; quinolinate from iminoaspartate: step 1/1. Functionally, catalyzes the condensation of iminoaspartate with dihydroxyacetone phosphate to form quinolinate. The sequence is that of Quinolinate synthase from Anoxybacillus flavithermus (strain DSM 21510 / WK1).